The sequence spans 131 residues: MMNFRQRMGWIGVSLYLFVSAAAFYYVFEINDTYNKLALEHVQLKPQEPHRGTTWTHSLKARLLSLPFWLWATLFLIPYFQVFLFLYSCTRADPKTVGYCIIPICLAIICNRHQSFVRASNQISRLQLIDT.

A run of 2 helical transmembrane segments spans residues 8–28 and 66–86; these read MGWI…YYVF and LPFW…FLFL.

The protein belongs to the LYSET family.

It localises to the golgi apparatus membrane. Required for mannose-6-phosphate-dependent trafficking of lysosomal enzymes. LYSET bridges GlcNAc-1-phosphate transferase (GNPTAB), to the membrane-bound transcription factor site-1 protease (MBTPS1), thus allowing proteolytic activation of the GNPTAB. GNPTAB is involved in the regulation of M6P-dependent Golgi-to-lysosome trafficking of lysosomal enzymes. LYSET is thus an essential factor for maturation and delivery of lysosomal hydrolases. This is Lysosomal enzyme trafficking factor (lyset-a) from Xenopus laevis (African clawed frog).